Here is a 54-residue protein sequence, read N- to C-terminus: Ovomucoid (54 aa).

The Kazal-like domain maps to 4–54; it reads VDCSDYPKPSCTLEDKPLCGSDNQTYSNKCSFCNAVVDSNGTLTLSHFGKC. 3 disulfide bridges follow: cysteine 6/cysteine 36, cysteine 14/cysteine 33, and cysteine 22/cysteine 54. An N-linked (GlcNAc...) asparagine glycan is attached at asparagine 43.

The protein resides in the secreted. The sequence is that of Ovomucoid from Megapodius freycinet (Dusky scrubfowl).